The following is a 374-amino-acid chain: Queuine tRNA-ribosyltransferase (374 aa).

The active-site Proton acceptor is Asp-94. Substrate contacts are provided by residues 94–98 (DSGGF), Asp-148, Gln-191, and Gly-218. An RNA binding region spans residues 249 to 255 (GVGSPDY). The Nucleophile role is filled by Asp-268. An RNA binding; important for wobble base 34 recognition region spans residues 273–277 (TRIGR). Positions 306, 308, 311, and 337 each coordinate Zn(2+).

The protein belongs to the queuine tRNA-ribosyltransferase family. As to quaternary structure, homodimer. Within each dimer, one monomer is responsible for RNA recognition and catalysis, while the other monomer binds to the replacement base PreQ1. The cofactor is Zn(2+).

It carries out the reaction 7-aminomethyl-7-carbaguanine + guanosine(34) in tRNA = 7-aminomethyl-7-carbaguanosine(34) in tRNA + guanine. It participates in tRNA modification; tRNA-queuosine biosynthesis. Functionally, catalyzes the base-exchange of a guanine (G) residue with the queuine precursor 7-aminomethyl-7-deazaguanine (PreQ1) at position 34 (anticodon wobble position) in tRNAs with GU(N) anticodons (tRNA-Asp, -Asn, -His and -Tyr). Catalysis occurs through a double-displacement mechanism. The nucleophile active site attacks the C1' of nucleotide 34 to detach the guanine base from the RNA, forming a covalent enzyme-RNA intermediate. The proton acceptor active site deprotonates the incoming PreQ1, allowing a nucleophilic attack on the C1' of the ribose to form the product. After dissociation, two additional enzymatic reactions on the tRNA convert PreQ1 to queuine (Q), resulting in the hypermodified nucleoside queuosine (7-(((4,5-cis-dihydroxy-2-cyclopenten-1-yl)amino)methyl)-7-deazaguanosine). The chain is Queuine tRNA-ribosyltransferase from Acetivibrio thermocellus (strain ATCC 27405 / DSM 1237 / JCM 9322 / NBRC 103400 / NCIMB 10682 / NRRL B-4536 / VPI 7372) (Clostridium thermocellum).